A 1108-amino-acid polypeptide reads, in one-letter code: Mediator of RNA polymerase II transcription subunit 14 (1108 aa).

3 disordered regions span residues Met1–Thr30, Ser35–Leu54, and Gln1048–Thr1108. Residues Ser35 to Asn52 are compositionally biased toward polar residues. Over residues Gln1048–Leu1080 the composition is skewed to low complexity.

It belongs to the Mediator complex subunit 14 family. In terms of assembly, component of the Mediator complex.

It localises to the nucleus. Component of the Mediator complex, a coactivator involved in the regulated transcription of nearly all RNA polymerase II-dependent genes. Mediator functions as a bridge to convey information from gene-specific regulatory proteins to the basal RNA polymerase II transcription machinery. Mediator is recruited to promoters by direct interactions with regulatory proteins and serves as a scaffold for the assembly of a functional preinitiation complex with RNA polymerase II and the general transcription factors. The polypeptide is Mediator of RNA polymerase II transcription subunit 14 (RGR1) (Pyricularia oryzae (strain 70-15 / ATCC MYA-4617 / FGSC 8958) (Rice blast fungus)).